The chain runs to 318 residues: TPR repeat-containing protein MJ0940 (318 aa).

8 TPR repeats span residues 17-50 (SLTYLIKSYEYRDRGNLLESLYYLDKALELNPDF), 84-117 (PVAYALLGQLYELLGNFDNALECYEKSLGIEEKF), 119-151 (TAFFLKVLCLGLSGKYDELLKCCDRLISFAPNF), 152-185 (IPAYIIKANMLRKLGRYEEALACVNKVLELKEND), 186-219 (TNAIYLKALILNRIGNCDEALKYYEKLIDELNVT), 221-254 (IEVIREAIYLSFLFNKLDKAEKYIEMGLKLRPDD), 255-288 (ASLWYFKGKLYEKQNKFEEALKYYNKAIQLMPHH), and 289-318 (TKALLAKARVLEKLGRIEESIECYNKALDR).

The polypeptide is TPR repeat-containing protein MJ0940 (Methanocaldococcus jannaschii (strain ATCC 43067 / DSM 2661 / JAL-1 / JCM 10045 / NBRC 100440) (Methanococcus jannaschii)).